The chain runs to 73 residues: Waprin-Phi2 (73 aa).

Positions 1-21 are cleaved as a signal peptide; that stretch reads MKATLLLLLLFAVILPGTISA. The 51-residue stretch at 22 to 72 folds into the WAP domain; sequence EQEKPGSCPNVDMPIPPLGLCKTTCSKDSDCSETKKCCKNGCGFMTCTTAR. Cystine bridges form between Cys-29–Cys-59, Cys-42–Cys-63, Cys-46–Cys-58, and Cys-52–Cys-68.

It belongs to the venom waprin family. In terms of tissue distribution, expressed by the venom gland.

The protein resides in the secreted. Damages membranes of susceptible bacteria. Has no hemolytic activity. Not toxic to mice. Does not inhibit the proteinases elastase and cathepsin G. This is Waprin-Phi2 from Philodryas olfersii (Green snake).